The sequence spans 769 residues: Intron Large complex component GCFC2 (769 aa).

2 disordered regions span residues 1–122 (MALR…PIVE) and 134–212 (RKRE…DENQ). Residues Ser-16, Ser-17, Ser-19, and Ser-85 each carry the phosphoserine modification. At Thr-86 the chain carries Phosphothreonine. Phosphoserine is present on residues Ser-118 and Ser-169. Basic and acidic residues predominate over residues 190-201 (RMAEETSIRSEE). Acidic residues predominate over residues 202-212 (SSEESQEDENQ). 2 positions are modified to phosphoserine: Ser-203 and Ser-206. The stretch at 256–308 (NLEIIKKQLNNRLTLLQESHRSHQREYEKYEQDIKSSKTAIQNLESASDHAQN) forms a coiled coil.

It belongs to the GCF family. Found in the Intron Large (IL) complex, a post-mRNA release spliceosomal complex containing the excised intron, U2, U5 and U6 snRNPs, and splicing factors. Interacts with TFIP11 and DHX15.

It localises to the nucleus. The protein localises to the nucleoplasm. The protein resides in the nucleolus. Functionally, involved in pre-mRNA splicing through regulating spliceosome C complex formation. May play a role during late-stage splicing events and turnover of excised introns. The polypeptide is Intron Large complex component GCFC2 (Gcfc2) (Mus musculus (Mouse)).